Reading from the N-terminus, the 490-residue chain is Katanin p60 ATPase-containing subunit A-like 1 (490 aa).

M1 bears the N-acetylmethionine mark. The tract at residues D95 to A184 is disordered. A compositionally biased stretch (basic and acidic residues) spans P116–M127. Low complexity predominate over residues A128–A139. The segment covering S143 to M169 has biased composition (basic and acidic residues). Phosphoserine is present on S174. An ATP-binding site is contributed by G248–T255.

This sequence belongs to the AAA ATPase family. Katanin p60 subunit A1 subfamily. A-like 1 sub-subfamily. In terms of assembly, interacts with KATNB1 and KATNBL1. As to expression, expressed in testis, restricted to Sertoli cells (at protein level).

It is found in the cytoplasm. The protein resides in the cytoskeleton. Its subcellular location is the spindle pole. The protein localises to the spindle. The enzyme catalyses n ATP + n H2O + a microtubule = n ADP + n phosphate + (n+1) alpha/beta tubulin heterodimers.. Its function is as follows. Regulates microtubule dynamics in Sertoli cells, a process that is essential for spermiogenesis and male fertility. Severs microtubules in an ATP-dependent manner, promoting rapid reorganization of cellular microtubule arrays. Has microtubule-severing activity in vitro. The chain is Katanin p60 ATPase-containing subunit A-like 1 from Homo sapiens (Human).